Consider the following 1939-residue polypeptide: Myosin-4 (1939 aa).

Residues 33 to 82 enclose the Myosin N-terminal SH3-like domain; sequence DAKTSVFVVDPKESYVKAIVQSREGGKVTAKTEAGATVTVKEDQVFSMNP. 2 positions are modified to phosphothreonine: Thr-64 and Thr-69. Ser-79 is modified (phosphoserine). Residues 86–782 form the Myosin motor domain; the sequence is DKIEDMAMMT…LLGTLEEMRD (697 aa). Lys-130 is subject to N6,N6,N6-trimethyllysine. An ATP-binding site is contributed by 179–186; that stretch reads GESGAGKT. Tyr-389 carries the post-translational modification Phosphotyrosine. Thr-391 is modified (phosphothreonine). The residue at position 392 (Ser-392) is a Phosphoserine. Thr-419 is modified (phosphothreonine). At Tyr-424 the chain carries Phosphotyrosine. Ser-625 carries the post-translational modification Phosphoserine. Residues 659–681 form an actin-binding region; that stretch reads LNKLMTNLRSTHPHFVRCIIPNE. His-757 carries the pros-methylhistidine modification. Residues 761–775 are actin-binding; the sequence is KFGHTKVFFKAGLLG. Thr-776 bears the Phosphothreonine mark. The region spanning 785-814 is the IQ domain; the sequence is LAQLITRTQAICRGFLMRVEFRKMMERRES. Positions 843–1939 form a coiled coil; that stretch reads LLKSAETEKE…EVHTKVISEE (1097 aa). Residues Ser-1092, Ser-1162, and Ser-1237 each carry the phosphoserine modification. Residue Thr-1241 is modified to Phosphothreonine. Phosphoserine is present on Ser-1243. Residue Thr-1255 is modified to Phosphothreonine. Ser-1261 is modified (phosphoserine). A Phosphothreonine modification is found at Thr-1265. Ser-1278 carries the post-translational modification Phosphoserine. The residue at position 1286 (Thr-1286) is a Phosphothreonine. Residues Ser-1288, Ser-1292, Ser-1303, Ser-1306, and Ser-1413 each carry the phosphoserine modification. The residue at position 1464 (Tyr-1464) is a Phosphotyrosine. Thr-1467 is subject to Phosphothreonine. Phosphoserine is present on Ser-1474. Tyr-1492 is subject to Phosphotyrosine. A Phosphoserine modification is found at Ser-1495. Thr-1501 is subject to Phosphothreonine. Ser-1514 is modified (phosphoserine). The residue at position 1517 (Thr-1517) is a Phosphothreonine. A phosphoserine mark is found at Ser-1542, Ser-1547, Ser-1554, Ser-1574, Ser-1600, Ser-1603, Ser-1714, and Ser-1726. Thr-1730 and Thr-1736 each carry phosphothreonine. Ser-1739 carries the post-translational modification Phosphoserine.

Belongs to the TRAFAC class myosin-kinesin ATPase superfamily. Myosin family. As to quaternary structure, muscle myosin is a hexameric protein that consists of 2 heavy chain subunits (MHC), 2 alkali light chain subunits (MLC) and 2 regulatory light chain subunits (MLC-2).

Its subcellular location is the cytoplasm. It is found in the myofibril. Its function is as follows. Muscle contraction. This Homo sapiens (Human) protein is Myosin-4 (MYH4).